Consider the following 147-residue polypeptide: Globin (147 aa).

A Globin domain is found at 1 to 147 (GLSAEQKTAL…LLGVLIENHQ (147 aa)). Positions 66 and 98 each coordinate heme b.

It belongs to the globin family. In terms of assembly, homodimer.

The protein is Globin of Tritia mutabilis (Sea snail).